A 320-amino-acid chain; its full sequence is Malate dehydrogenase (320 aa).

Residues 10–15 (GSGMIG) and Asp-34 each bind NAD(+). Residues Arg-83 and Arg-89 each coordinate substrate. Residues Asn-96 and 119 to 121 (ITN) each bind NAD(+). 2 residues coordinate substrate: Asn-121 and Arg-152. His-176 acts as the Proton acceptor in catalysis.

The protein belongs to the LDH/MDH superfamily. MDH type 3 family.

The enzyme catalyses (S)-malate + NAD(+) = oxaloacetate + NADH + H(+). Functionally, catalyzes the reversible oxidation of malate to oxaloacetate. The sequence is that of Malate dehydrogenase from Brucella melitensis biotype 2 (strain ATCC 23457).